We begin with the raw amino-acid sequence, 236 residues long: uncharacterized protein (236 aa).

This is an uncharacterized protein from Saccharolobus islandicus (Sulfolobus islandicus).